The primary structure comprises 90 residues: Probable Fe(2+)-trafficking protein (90 aa).

Belongs to the Fe(2+)-trafficking protein family.

Could be a mediator in iron transactions between iron acquisition and iron-requiring processes, such as synthesis and/or repair of Fe-S clusters in biosynthetic enzymes. This is Probable Fe(2+)-trafficking protein from Xylella fastidiosa (strain M23).